The primary structure comprises 511 residues: Peroxisomal N(1)-acetyl-spermine/spermidine oxidase (511 aa).

N-acetylmethionine is present on methionine 1. FAD contacts are provided by residues alanine 24, glutamate 45, arginine 53, and 69–70; that span reads HW. Residues histidine 72 and valine 194 each coordinate substrate. Valine 247 provides a ligand contact to FAD. Asparagine 320 provides a ligand contact to substrate. Residues glutamate 472 and 481 to 482 each bind FAD; that span reads TT. The short motif at 509–511 is the Microbody targeting signal element; it reads PRL.

This sequence belongs to the flavin monoamine oxidase family. As to quaternary structure, monomer. FAD is required as a cofactor. Widely expressed. Not detected in spleen. Expressed at lower level in neoplastic tissues.

The protein resides in the peroxisome. The protein localises to the cytoplasm. The enzyme catalyses N(1)-acetylspermine + O2 + H2O = 3-acetamidopropanal + spermidine + H2O2. It carries out the reaction N(1)-acetylspermidine + O2 + H2O = 3-acetamidopropanal + putrescine + H2O2. The catalysed reaction is N(1),N(12)-diacetylspermine + O2 + H2O = 3-acetamidopropanal + N(1)-acetylspermidine + H2O2. It participates in amine and polyamine metabolism; spermine metabolism. Flavoenzyme which catalyzes the oxidation of N(1)-acetylspermine to spermidine and is thus involved in the polyamine back-conversion. Can also oxidize N(1)-acetylspermidine to putrescine. Substrate specificity: N(1)-acetylspermine = N(1)-acetylspermidine &gt; N(1),N(12)-diacylspermine &gt;&gt; spermine. Does not oxidize spermidine. Plays an important role in the regulation of polyamine intracellular concentration and has the potential to act as a determinant of cellular sensitivity to the antitumor polyamine analogs. The polypeptide is Peroxisomal N(1)-acetyl-spermine/spermidine oxidase (PAOX) (Homo sapiens (Human)).